The primary structure comprises 165 residues: Transcription antitermination protein NusB (165 aa).

It belongs to the NusB family.

Involved in transcription antitermination. Required for transcription of ribosomal RNA (rRNA) genes. Binds specifically to the boxA antiterminator sequence of the ribosomal RNA (rrn) operons. In Nitratidesulfovibrio vulgaris (strain DSM 19637 / Miyazaki F) (Desulfovibrio vulgaris), this protein is Transcription antitermination protein NusB.